The primary structure comprises 346 residues: MVKAYKQAGVDIEAGYQAVALMKQHVQKTMRPEVLGGIGGFGGLFDLSSLDYRQPVLVSGTDGVGTKLKLAFLLDRHNTIGIDCVAMCVNDIVVQGAEPLFFLDYIACGKAVPEKIAAIVKGVADGCVEAGCALIGGETAEMPGMYAEDEYDLAGFVVGIAEKERLVTGQTIQAGDVLIGLPSSGLHSNGYSLVRRIIFEQAKLSLDEIYEPLDVPLGEELLKPTRIYAKLLRSVLGRFTIKGMAHITGGGFIENIPRMLPQGLGVRIQRGSWPVLPIFDFLRAKGNLEEEEMFSVFNMGIGLVLAVSPETAAPLVQWLDEQNEPAYIIGEVVEGAGVSFTGGNEA.

The protein belongs to the AIR synthase family.

It localises to the cytoplasm. It carries out the reaction 2-formamido-N(1)-(5-O-phospho-beta-D-ribosyl)acetamidine + ATP = 5-amino-1-(5-phospho-beta-D-ribosyl)imidazole + ADP + phosphate + H(+). It participates in purine metabolism; IMP biosynthesis via de novo pathway; 5-amino-1-(5-phospho-D-ribosyl)imidazole from N(2)-formyl-N(1)-(5-phospho-D-ribosyl)glycinamide: step 2/2. The protein is Phosphoribosylformylglycinamidine cyclo-ligase of Geobacillus thermodenitrificans (strain NG80-2).